A 427-amino-acid chain; its full sequence is Kynureninase (427 aa).

Pyridoxal 5'-phosphate-binding positions include Thr-104, Thr-105, 132–135, Asp-213, His-216, and Tyr-238; that span reads FPSD. Lys-239 bears the N6-(pyridoxal phosphate)lysine mark. Positions 267 and 295 each coordinate pyridoxal 5'-phosphate.

The protein belongs to the kynureninase family. As to quaternary structure, homodimer. Requires pyridoxal 5'-phosphate as cofactor.

It catalyses the reaction L-kynurenine + H2O = anthranilate + L-alanine + H(+). It carries out the reaction 3-hydroxy-L-kynurenine + H2O = 3-hydroxyanthranilate + L-alanine + H(+). It functions in the pathway amino-acid degradation; L-kynurenine degradation; L-alanine and anthranilate from L-kynurenine: step 1/1. Its pathway is cofactor biosynthesis; NAD(+) biosynthesis; quinolinate from L-kynurenine: step 2/3. Its function is as follows. Catalyzes the cleavage of L-kynurenine (L-Kyn) and L-3-hydroxykynurenine (L-3OHKyn) into anthranilic acid (AA) and 3-hydroxyanthranilic acid (3-OHAA), respectively. The chain is Kynureninase from Shouchella clausii (strain KSM-K16) (Alkalihalobacillus clausii).